The following is a 262-amino-acid chain: Virulence plasmid protein pGP6-D-related protein (262 aa).

This sequence belongs to the UPF0137 (pGP6-D) family.

This Chlamydia muridarum (strain MoPn / Nigg) protein is Virulence plasmid protein pGP6-D-related protein.